The sequence spans 201 residues: Beta-lactamase inhibitory protein (201 aa).

An N-terminal signal peptide occupies residues 1–36 (MRTVGIGAGVRRLGRAVVMAAAVGGLVLGSAGASNA). A run of 2 repeats spans residues 37–112 (AGVM…EKLL) and 116–201 (APTL…WDLV). Intrachain disulfides connect Cys-66/Cys-78 and Cys-145/Cys-167.

As to quaternary structure, interacts with E.coli beta-lactamase TEM-1; interaction inhibits hydrolysis of beta-lactam antibiotics. Interacts with K.pneumoniae beta-lactamase SHV-1. Interacts with K.pneumoniae beta-lactamases KPC-2 and KPC-3; interaction inhibits hydrolysis of beta-lactam antibiotics. Interacts with E.coli beta-lactamases CTX-M-14 and CTX-M-15; interaction inhibits hydrolysis of beta-lactam antibiotics.

The protein localises to the secreted. In terms of biological role, inhibits a wide variety of beta lactamases. This is Beta-lactamase inhibitory protein from Streptomyces clavuligerus.